Here is a 371-residue protein sequence, read N- to C-terminus: Probable beta-1,3-galactosyltransferase 12 (371 aa).

The interval 1–36 (MPLFSHRFTTASSSSPASPSYYNKPSSKTHKPNSSS) is disordered. Positions 11-36 (ASSSSPASPSYYNKPSSKTHKPNSSS) are enriched in low complexity. Residues 46 to 66 (VAIIFFSLVSVFIGVAGTIFA) traverse the membrane as a helical; Signal-anchor for type II membrane protein segment. N-linked (GlcNAc...) asparagine glycosylation is present at asparagine 291.

Belongs to the glycosyltransferase 31 family. Requires Mn(2+) as cofactor.

It localises to the golgi apparatus membrane. It participates in protein modification; protein glycosylation. Beta-1,3-galactosyltransferase that transfers galactose from UDP-galactose to substrates with a terminal glycosyl residue. The protein is Probable beta-1,3-galactosyltransferase 12 (B3GALT12) of Arabidopsis thaliana (Mouse-ear cress).